Here is a 147-residue protein sequence, read N- to C-terminus: FAD synthase (147 aa).

ATP-binding positions include 13 to 14 (TF), 18 to 21 (HEGH), D100, and F127.

Belongs to the archaeal FAD synthase family. Homodimer. A divalent metal cation serves as cofactor.

It catalyses the reaction FMN + ATP + H(+) = FAD + diphosphate. Its pathway is cofactor biosynthesis; FAD biosynthesis; FAD from FMN: step 1/1. Catalyzes the transfer of the AMP portion of ATP to flavin mononucleotide (FMN) to produce flavin adenine dinucleotide (FAD) coenzyme. The chain is FAD synthase from Korarchaeum cryptofilum (strain OPF8).